The primary structure comprises 378 residues: Chaperone protein DnaJ (378 aa).

The J domain maps to 5–70 (DYYQILGIPK…EKRTAYDQYG (66 aa)). The CR-type zinc-finger motif lies at 133–211 (GTTKEIRIPT…CRGQGRIKTN (79 aa)). 8 residues coordinate Zn(2+): Cys-146, Cys-149, Cys-163, Cys-166, Cys-185, Cys-188, Cys-199, and Cys-202. CXXCXGXG motif repeat units lie at residues 146 to 153 (CKTCYGMG), 163 to 170 (CSTCHGKG), 185 to 192 (CPTCNGIG), and 199 to 206 (CRMCRGQG).

It belongs to the DnaJ family. As to quaternary structure, homodimer. The cofactor is Zn(2+).

Its subcellular location is the cytoplasm. Functionally, participates actively in the response to hyperosmotic and heat shock by preventing the aggregation of stress-denatured proteins and by disaggregating proteins, also in an autonomous, DnaK-independent fashion. Unfolded proteins bind initially to DnaJ; upon interaction with the DnaJ-bound protein, DnaK hydrolyzes its bound ATP, resulting in the formation of a stable complex. GrpE releases ADP from DnaK; ATP binding to DnaK triggers the release of the substrate protein, thus completing the reaction cycle. Several rounds of ATP-dependent interactions between DnaJ, DnaK and GrpE are required for fully efficient folding. Also involved, together with DnaK and GrpE, in the DNA replication of plasmids through activation of initiation proteins. This Buchnera aphidicola subsp. Schizaphis graminum (strain Sg) protein is Chaperone protein DnaJ.